We begin with the raw amino-acid sequence, 266 residues long: Undecaprenyl-diphosphatase (266 aa).

The next 8 helical transmembrane spans lie at 1–21 (MDTL…FLPI), 39–59 (QGLS…VIYF), 83–103 (SKLA…GFTA), 111–131 (LRGP…LWFA), 149–169 (ALLI…RSGI), 183–203 (AAAR…ALLM), 218–238 (ALAL…YFFL), and 246–266 (MTPF…FIYL).

Belongs to the UppP family.

The protein resides in the cell inner membrane. The enzyme catalyses di-trans,octa-cis-undecaprenyl diphosphate + H2O = di-trans,octa-cis-undecaprenyl phosphate + phosphate + H(+). Catalyzes the dephosphorylation of undecaprenyl diphosphate (UPP). Confers resistance to bacitracin. This Shewanella amazonensis (strain ATCC BAA-1098 / SB2B) protein is Undecaprenyl-diphosphatase.